The primary structure comprises 262 residues: Cap-specific mRNA (nucleoside-2'-O-)-methyltransferase (262 aa).

Residues 34-226 (TRRPRCWRKL…ERYLICFNKL (193 aa)) form the RrmJ-type SAM-dependent 2'-O-MTase domain. The S-adenosyl-L-methionine site is built by Gly-67 and Asp-140. Residue Lys-180 is the Proton acceptor of the active site.

The enzyme catalyses a 5'-end (N(7)-methyl 5'-triphosphoguanosine)-ribonucleoside in mRNA + S-adenosyl-L-methionine = a 5'-end (N(7)-methyl 5'-triphosphoguanosine)-(2'-O-methyl-ribonucleoside) in mRNA + S-adenosyl-L-homocysteine + H(+). In terms of biological role, S-adenosyl-L-methionine-dependent methyltransferase that mediates mRNA cap 2'-O-ribose methylation to the 5'-cap structure of late viral transcripts. The sequence is that of Cap-specific mRNA (nucleoside-2'-O-)-methyltransferase from Lepidoptera (butterflies and moths).